Reading from the N-terminus, the 185-residue chain is Adenylate kinase (185 aa).

8 to 16 serves as a coordination point for ATP; it reads GIPGSGSTT.

Belongs to the archaeal adenylate kinase family.

Its subcellular location is the cytoplasm. It carries out the reaction AMP + ATP = 2 ADP. The chain is Adenylate kinase (adkA) from Methanothermobacter thermautotrophicus (strain ATCC 29096 / DSM 1053 / JCM 10044 / NBRC 100330 / Delta H) (Methanobacterium thermoautotrophicum).